Here is a 431-residue protein sequence, read N- to C-terminus: Glutamate--tRNA ligase 1 (431 aa).

A 'HIGH' region motif is present at residues 6 to 16 (PSPTGDMHIGN). The short motif at 235 to 239 (KMSKR) is the 'KMSKS' region element. Lysine 238 lines the ATP pocket.

Belongs to the class-I aminoacyl-tRNA synthetase family. Glutamate--tRNA ligase type 1 subfamily. As to quaternary structure, monomer.

It is found in the cytoplasm. The enzyme catalyses tRNA(Glu) + L-glutamate + ATP = L-glutamyl-tRNA(Glu) + AMP + diphosphate. Its function is as follows. Catalyzes the attachment of glutamate to tRNA(Glu) in a two-step reaction: glutamate is first activated by ATP to form Glu-AMP and then transferred to the acceptor end of tRNA(Glu). This is Glutamate--tRNA ligase 1 from Campylobacter jejuni subsp. jejuni serotype O:6 (strain 81116 / NCTC 11828).